We begin with the raw amino-acid sequence, 231 residues long: Biosynthetic peptidoglycan transglycosylase (231 aa).

A helical membrane pass occupies residues 12-32 (LLAAFALLLLWQVWLFAQVAW).

It belongs to the glycosyltransferase 51 family.

Its subcellular location is the cell inner membrane. It carries out the reaction [GlcNAc-(1-&gt;4)-Mur2Ac(oyl-L-Ala-gamma-D-Glu-L-Lys-D-Ala-D-Ala)](n)-di-trans,octa-cis-undecaprenyl diphosphate + beta-D-GlcNAc-(1-&gt;4)-Mur2Ac(oyl-L-Ala-gamma-D-Glu-L-Lys-D-Ala-D-Ala)-di-trans,octa-cis-undecaprenyl diphosphate = [GlcNAc-(1-&gt;4)-Mur2Ac(oyl-L-Ala-gamma-D-Glu-L-Lys-D-Ala-D-Ala)](n+1)-di-trans,octa-cis-undecaprenyl diphosphate + di-trans,octa-cis-undecaprenyl diphosphate + H(+). Its pathway is cell wall biogenesis; peptidoglycan biosynthesis. Functionally, peptidoglycan polymerase that catalyzes glycan chain elongation from lipid-linked precursors. This chain is Biosynthetic peptidoglycan transglycosylase, found in Azoarcus sp. (strain BH72).